We begin with the raw amino-acid sequence, 296 residues long: MPWLQIRINTTPDHVPAFEDTLLDCGAMVVTFEDVHDDPVYEPDLNTTPLWKNTKVTGLFEADADIEHIRPVIEHKAESLGETDIDMKIEIVEDKDWEREWMDNYHPIQFGERLWVCPSWREVPDPNAVTLMLDPGLAFGTGTHPTTALCLQWLDSIDCKDKTIIDYGCGSGILGIAGLLLGANNMVGIDIDPQAVQATEANAERNKIDPSRLEVKLPPYESDLQADIVVANILAGPLAHLAPTISALVKNQGQLALSGILANQAQEVIEAYQEWFTIDSITEKEEWVRIVGTKHA.

4 residues coordinate S-adenosyl-L-methionine: T147, G168, D190, and N232.

This sequence belongs to the methyltransferase superfamily. PrmA family.

The protein resides in the cytoplasm. It catalyses the reaction L-lysyl-[protein] + 3 S-adenosyl-L-methionine = N(6),N(6),N(6)-trimethyl-L-lysyl-[protein] + 3 S-adenosyl-L-homocysteine + 3 H(+). In terms of biological role, methylates ribosomal protein L11. The chain is Ribosomal protein L11 methyltransferase from Marinomonas sp. (strain MWYL1).